Reading from the N-terminus, the 701-residue chain is Polyribonucleotide nucleotidyltransferase (701 aa).

Residues D487 and D493 each coordinate Mg(2+). The KH domain maps to 554 to 613 (PTMIAMKIDTDKIRDVIGKGGATIRAICEETKASIDIEDDGSIKIFGETKEAAEAARQRV). Residues 623 to 691 (GKIYVGKVER…NRGRIKLSIK (69 aa)) enclose the S1 motif domain.

It belongs to the polyribonucleotide nucleotidyltransferase family. As to quaternary structure, component of the RNA degradosome, which is a multiprotein complex involved in RNA processing and mRNA degradation. Mg(2+) serves as cofactor.

Its subcellular location is the cytoplasm. The enzyme catalyses RNA(n+1) + phosphate = RNA(n) + a ribonucleoside 5'-diphosphate. Involved in mRNA degradation. Catalyzes the phosphorolysis of single-stranded polyribonucleotides processively in the 3'- to 5'-direction. This Pseudomonas fluorescens (strain SBW25) protein is Polyribonucleotide nucleotidyltransferase.